The following is a 564-amino-acid chain: Ribulokinase (564 aa).

Belongs to the ribulokinase family.

The enzyme catalyses D-ribulose + ATP = D-ribulose 5-phosphate + ADP + H(+). It carries out the reaction L-ribulose + ATP = L-ribulose 5-phosphate + ADP + H(+). It participates in carbohydrate degradation; L-arabinose degradation via L-ribulose; D-xylulose 5-phosphate from L-arabinose (bacterial route): step 2/3. The sequence is that of Ribulokinase from Geobacillus thermodenitrificans (strain NG80-2).